Reading from the N-terminus, the 299-residue chain is 4-hydroxy-3-methylbut-2-enyl diphosphate reductase (299 aa).

[4Fe-4S] cluster is bound at residue cysteine 12. Residues histidine 42 and histidine 88 each coordinate (2E)-4-hydroxy-3-methylbut-2-enyl diphosphate. Dimethylallyl diphosphate contacts are provided by histidine 42 and histidine 88. Isopentenyl diphosphate is bound by residues histidine 42 and histidine 88. Cysteine 110 lines the [4Fe-4S] cluster pocket. Position 138 (histidine 138) interacts with (2E)-4-hydroxy-3-methylbut-2-enyl diphosphate. A dimethylallyl diphosphate-binding site is contributed by histidine 138. Residue histidine 138 participates in isopentenyl diphosphate binding. Glutamate 140 functions as the Proton donor in the catalytic mechanism. Threonine 177 contacts (2E)-4-hydroxy-3-methylbut-2-enyl diphosphate. A [4Fe-4S] cluster-binding site is contributed by cysteine 205. Residues serine 233, asparagine 235, and serine 277 each contribute to the (2E)-4-hydroxy-3-methylbut-2-enyl diphosphate site. Dimethylallyl diphosphate-binding residues include serine 233, asparagine 235, and serine 277. Serine 233, asparagine 235, and serine 277 together coordinate isopentenyl diphosphate.

The protein belongs to the IspH family. It depends on [4Fe-4S] cluster as a cofactor.

The enzyme catalyses isopentenyl diphosphate + 2 oxidized [2Fe-2S]-[ferredoxin] + H2O = (2E)-4-hydroxy-3-methylbut-2-enyl diphosphate + 2 reduced [2Fe-2S]-[ferredoxin] + 2 H(+). It catalyses the reaction dimethylallyl diphosphate + 2 oxidized [2Fe-2S]-[ferredoxin] + H2O = (2E)-4-hydroxy-3-methylbut-2-enyl diphosphate + 2 reduced [2Fe-2S]-[ferredoxin] + 2 H(+). It participates in isoprenoid biosynthesis; dimethylallyl diphosphate biosynthesis; dimethylallyl diphosphate from (2E)-4-hydroxy-3-methylbutenyl diphosphate: step 1/1. The protein operates within isoprenoid biosynthesis; isopentenyl diphosphate biosynthesis via DXP pathway; isopentenyl diphosphate from 1-deoxy-D-xylulose 5-phosphate: step 6/6. Its function is as follows. Catalyzes the conversion of 1-hydroxy-2-methyl-2-(E)-butenyl 4-diphosphate (HMBPP) into a mixture of isopentenyl diphosphate (IPP) and dimethylallyl diphosphate (DMAPP). Acts in the terminal step of the DOXP/MEP pathway for isoprenoid precursor biosynthesis. This Malacoplasma penetrans (strain HF-2) (Mycoplasma penetrans) protein is 4-hydroxy-3-methylbut-2-enyl diphosphate reductase.